A 280-amino-acid polypeptide reads, in one-letter code: Chemotaxis protein methyltransferase 2 (280 aa).

Residues 10 to 280 (FGNQEFHYTR…SVGQTVYSPA (271 aa)) form the CheR-type methyltransferase domain. Residues Asn-85, Thr-87, Arg-91, Glu-125, Asp-150, 208–209 (NL), and 226–227 (RN) contribute to the S-adenosyl-L-methionine site.

As to quaternary structure, interacts with the C-terminal pentapeptide GWEEF of the methyl-accepting chemotaxis protein McpB.

The catalysed reaction is L-glutamyl-[protein] + S-adenosyl-L-methionine = [protein]-L-glutamate 5-O-methyl ester + S-adenosyl-L-homocysteine. In terms of biological role, methylation of the methyl-accepting chemotaxis proteins (MCP) to form gamma-glutamyl methyl ester residues in MCP. It specifically targets the McpB chemoreceptor. The chain is Chemotaxis protein methyltransferase 2 from Pseudomonas aeruginosa (strain ATCC 15692 / DSM 22644 / CIP 104116 / JCM 14847 / LMG 12228 / 1C / PRS 101 / PAO1).